Here is a 699-residue protein sequence, read N- to C-terminus: D-(-)-3-hydroxybutyrate oligomer hydrolase (699 aa).

The first 33 residues, Met1–Ala33, serve as a signal peptide directing secretion. Catalysis depends on Ser311, which acts as the Charge relay system.

The protein belongs to the D-(-)-3-hydroxybutyrate oligomer hydrolase family.

Its subcellular location is the secreted. It carries out the reaction (3R)-hydroxybutanoate dimer + H2O = 2 (R)-3-hydroxybutanoate + H(+). Its pathway is lipid metabolism; butanoate metabolism. Functionally, participates in the degradation of poly-3-hydroxybutyrate (PHB). It works downstream of poly(3-hydroxybutyrate) depolymerase, hydrolyzing D(-)-3-hydroxybutyrate oligomers of various length (3HB-oligomers) into 3HB-monomers. In Burkholderia mallei (strain SAVP1), this protein is D-(-)-3-hydroxybutyrate oligomer hydrolase.